Reading from the N-terminus, the 477-residue chain is Ribulose bisphosphate carboxylase large chain (477 aa).

Residues 1 to 2 constitute a propeptide that is removed on maturation; it reads MS. At proline 3 the chain carries N-acetylproline. Lysine 14 is modified (N6,N6,N6-trimethyllysine). Residues asparagine 123 and threonine 173 each contribute to the substrate site. Residue lysine 175 is the Proton acceptor of the active site. Lysine 177 is a binding site for substrate. Lysine 201, aspartate 203, and glutamate 204 together coordinate Mg(2+). Lysine 201 is modified (N6-carboxylysine). Histidine 294 acts as the Proton acceptor in catalysis. Substrate contacts are provided by arginine 295, histidine 327, and serine 379.

This sequence belongs to the RuBisCO large chain family. Type I subfamily. In terms of assembly, heterohexadecamer of 8 large chains and 8 small chains; disulfide-linked. The disulfide link is formed within the large subunit homodimers. It depends on Mg(2+) as a cofactor. Post-translationally, the disulfide bond which can form in the large chain dimeric partners within the hexadecamer appears to be associated with oxidative stress and protein turnover.

It is found in the plastid. It localises to the chloroplast. It catalyses the reaction 2 (2R)-3-phosphoglycerate + 2 H(+) = D-ribulose 1,5-bisphosphate + CO2 + H2O. The catalysed reaction is D-ribulose 1,5-bisphosphate + O2 = 2-phosphoglycolate + (2R)-3-phosphoglycerate + 2 H(+). Functionally, ruBisCO catalyzes two reactions: the carboxylation of D-ribulose 1,5-bisphosphate, the primary event in carbon dioxide fixation, as well as the oxidative fragmentation of the pentose substrate in the photorespiration process. Both reactions occur simultaneously and in competition at the same active site. This Manihot esculenta (Cassava) protein is Ribulose bisphosphate carboxylase large chain.